Reading from the N-terminus, the 282-residue chain is tRNA (guanine-N(1)-)-methyltransferase (282 aa).

145 to 150 (IGDYVL) serves as a coordination point for S-adenosyl-L-methionine.

This sequence belongs to the RNA methyltransferase TrmD family. As to quaternary structure, homodimer.

The protein resides in the cytoplasm. The catalysed reaction is guanosine(37) in tRNA + S-adenosyl-L-methionine = N(1)-methylguanosine(37) in tRNA + S-adenosyl-L-homocysteine + H(+). Specifically methylates guanosine-37 in various tRNAs. This is tRNA (guanine-N(1)-)-methyltransferase from Streptomyces avermitilis (strain ATCC 31267 / DSM 46492 / JCM 5070 / NBRC 14893 / NCIMB 12804 / NRRL 8165 / MA-4680).